The primary structure comprises 360 residues: 3-dehydroquinate synthase (360 aa).

Residues 71 to 76 (DGEQYK), 105 to 109 (GVVGD), 129 to 130 (TT), Lys-142, Lys-151, and 169 to 172 (TLNT) each bind NAD(+). 3 residues coordinate Zn(2+): Glu-184, His-248, and His-265.

The protein belongs to the sugar phosphate cyclases superfamily. Dehydroquinate synthase family. Co(2+) is required as a cofactor. It depends on Zn(2+) as a cofactor. Requires NAD(+) as cofactor.

It localises to the cytoplasm. The catalysed reaction is 7-phospho-2-dehydro-3-deoxy-D-arabino-heptonate = 3-dehydroquinate + phosphate. Its pathway is metabolic intermediate biosynthesis; chorismate biosynthesis; chorismate from D-erythrose 4-phosphate and phosphoenolpyruvate: step 2/7. Functionally, catalyzes the conversion of 3-deoxy-D-arabino-heptulosonate 7-phosphate (DAHP) to dehydroquinate (DHQ). In Coxiella burnetii (strain RSA 331 / Henzerling II), this protein is 3-dehydroquinate synthase.